A 1572-amino-acid polypeptide reads, in one-letter code: Multiple epidermal growth factor-like domains protein 6 (1572 aa).

A signal peptide spans 1 to 26; that stretch reads MPVGVEARASWRVVALTLLLLPAVPA. The 82-residue stretch at 40–121 folds into the EMI domain; it reads MPHVCAEQKL…QKPGQEGCLS (82 aa). 36 disulfides stabilise this stretch: C44/C107, C73/C79, C106/C119, C126/C137, C133/C146, C148/C161, C167/C178, C174/C187, C189/C202, C291/C302, C298/C311, C313/C326, C418/C429, C425/C438, C440/C453, C522/C535, C529/C542, C544/C553, C566/C578, C572/C585, C587/C596, C609/C621, C615/C628, C630/C639, C788/C797, C791/C804, C806/C815, C832/C840, C834/C847, C849/C858, C871/C884, C875/C891, C893/C902, C915/C927, C921/C934, and C936/C945. Positions 122–162 constitute an EGF-like 1; calcium-binding domain; it reads DVDECANANGGCEGPCCNTVGGFYCRCPPGYQLQGDGKTCQ. Residues 163-203 form the EGF-like 2; calcium-binding domain; that stretch reads DVDECRSHNGGCQHRCVNTPGSYLCECKPGFRLHTDGRTCL. The EGF-like 3; calcium-binding domain maps to 287–327; that stretch reads DVDECALGLAQCAHGCLNTQGSFKCVCHAGYELGADGRQCY. An EGF-like 4; calcium-binding domain is found at 414-454; that stretch reads DVDECASGHSGCEHHCSNLAGSFQCFCEAGYRLDEDRRGCT. EGF-like domains follow at residues 518–554, 562–597, 605–640, 785–816, 829–859, 867–903, 911–946, 997–1032, 1040–1075, 1083–1118, 1131–1161, 1169–1204, 1256–1291, 1299–1334, 1342–1377, 1390–1420, and 1428–1463; these read FGHDCSLTCDDCRNGGTCFPGLDGCDCPEGWTGIICN, FGKNCSSPCICQNGGTCDPVSGACRCPPGVSGAHCE, YGKHCRKKCHCANRGRCHRLYGACLCDPGLYGRFCH, QEICPACEHGASCDPETGTCLCLPGFVGSRCQ, QMRCACANDGHCHPATGRCSCAPGWTGLSCQ, WGPDCIHPCNCSAGHGNCDAVSGLCLCEAGYEGPQCE, FGPGCEQKCRCEHGATCDHVSGACTCPAGWRGSFCE, FGLNCSQICTCFNGASCDPVLGQCHCAPGWMGPTCL, YGKNCQHSCLCRNGGSCDPILGQCTCPEGWTGLACE, HGAGCRLNCSCLNGGTCDRLTGHCRCPAGWTGDKCQ, EEHCACRKGATCHHVTGACLCPPGWRGSHCE, FGEACAQRCHCPPGASCHHVSGECHCPPGFTGPGCE, YGPGCEQICKCLNGGTCDPATGACYCPAGFLGADCS, FGPSCAHVCTCGQGAACDPVSGTCICPPGKTGGHCE, FGKGCEHKCACRNGGLCHATNGSCSCPLGWMGPHCE, LLECSCQNNGSCEPTSGACLCGPGFYGQACE, and HGSGCQRVCECQQGAPCDPVSGRCLCPAGFRGQFCE. Residue N1000 is glycosylated (N-linked (GlcNAc...) asparagine). Disulfide bonds link C1001–C1013, C1007–C1020, C1022–C1031, C1044–C1056, C1050–C1063, C1065–C1074, C1087–C1099, C1093–C1106, C1108–C1117, C1134–C1142, C1136–C1149, C1151–C1160, C1173–C1185, C1177–C1192, C1194–C1203, C1260–C1272, C1266–C1279, C1281–C1290, C1303–C1315, C1309–C1322, C1324–C1333, C1346–C1358, C1352–C1365, C1367–C1376, C1393–C1401, C1395–C1408, C1410–C1419, C1432–C1444, C1438–C1451, and C1453–C1462.

Its subcellular location is the secreted. The chain is Multiple epidermal growth factor-like domains protein 6 (Megf6) from Mus musculus (Mouse).